The chain runs to 482 residues: tRNA sulfurtransferase (482 aa).

The 105-residue stretch at 61–165 (LAIRDALTRI…DDRLLLIKGR (105 aa)) folds into the THUMP domain. ATP-binding positions include 183 to 184 (LI), K265, G287, and Q296. C344 and C456 are disulfide-bonded. Positions 404–482 (FGPNDVILDI…GFNNVKVYRP (79 aa)) constitute a Rhodanese domain. C456 (cysteine persulfide intermediate) is an active-site residue.

It belongs to the ThiI family.

The protein localises to the cytoplasm. It carries out the reaction [ThiI sulfur-carrier protein]-S-sulfanyl-L-cysteine + a uridine in tRNA + 2 reduced [2Fe-2S]-[ferredoxin] + ATP + H(+) = [ThiI sulfur-carrier protein]-L-cysteine + a 4-thiouridine in tRNA + 2 oxidized [2Fe-2S]-[ferredoxin] + AMP + diphosphate. The enzyme catalyses [ThiS sulfur-carrier protein]-C-terminal Gly-Gly-AMP + S-sulfanyl-L-cysteinyl-[cysteine desulfurase] + AH2 = [ThiS sulfur-carrier protein]-C-terminal-Gly-aminoethanethioate + L-cysteinyl-[cysteine desulfurase] + A + AMP + 2 H(+). Its pathway is cofactor biosynthesis; thiamine diphosphate biosynthesis. In terms of biological role, catalyzes the ATP-dependent transfer of a sulfur to tRNA to produce 4-thiouridine in position 8 of tRNAs, which functions as a near-UV photosensor. Also catalyzes the transfer of sulfur to the sulfur carrier protein ThiS, forming ThiS-thiocarboxylate. This is a step in the synthesis of thiazole, in the thiamine biosynthesis pathway. The sulfur is donated as persulfide by IscS. The protein is tRNA sulfurtransferase of Escherichia coli O127:H6 (strain E2348/69 / EPEC).